The chain runs to 511 residues: MSKSKTKTDKRNQSSLSRIKLSALHYCMSDAEPSIAYLQDNSAFINNEWHNLVLEKIFPVYNPSTEEDITQVSEKSQHDSTEEDITQVSEKSQHDDDKAVVDISERGRLLNILADLIERDRDILAAIEHLDNGKPFDEAYLLDLASVLKELRYTAGWADKLHGTLRFAITIPTFQDLRFLRYTRHEPVGVCGEIIPWNIPLLMYIWKIGPALAAGNTVVLKPEELTPLTALTVATLIKEAGFPPGVVNVVSGYGPTAGAACLSHKDNDKLAFTGSTLVGKVVMKAAAKSNLKKVTLELGGKSPMIVFIDADLDWAVENAHFGVFFNQGQCCIAQSRITVHESIYDEIVERDLEKAKKQVLGNPFESDTRYGPQILKIEFDSIPRLINSAKAEGAKVLCGGGRDDSCVGYYIQPTVFADVTDEMRIAKEEIFGPVITISRFKSVDEAIKRVDNTKYGLAAYVFTKDKAIRISAALKAGTVWVNCVHVASYQIPFGGNKNSGMGRELGEYGLE.

A mitochondrion-targeting transit peptide spans 1–21 (MSKSKTKTDKRNQSSLSRIKL). The segment at 72 to 92 (VSEKSQHDSTEEDITQVSEKS) is disordered. 274-279 (GSTLVG) contacts NAD(+). The Proton acceptor role is filled by glutamate 297. Cysteine 331 functions as the Nucleophile in the catalytic mechanism.

It belongs to the aldehyde dehydrogenase family.

Its subcellular location is the mitochondrion matrix. It catalyses the reaction an aldehyde + NAD(+) + H2O = a carboxylate + NADH + 2 H(+). Its pathway is alcohol metabolism; ethanol degradation; acetate from ethanol: step 2/2. The chain is Aldehyde dehydrogenase 2, mitochondrial (ALD2) from Saccharomyces cerevisiae (Baker's yeast).